The chain runs to 411 residues: Proteasome-activating nucleotidase 2 (411 aa).

The stretch at 35 to 75 forms a coiled coil; it reads IVAVNGELQAQLDDVEARREELREEVNRLQRENETLKTASL. ATP-binding positions include 196–201 and His335; that span reads GTGKTM. The interval 408–411 is docks into pockets in the proteasome alpha-ring to cause gate opening; the sequence is SYIQ.

This sequence belongs to the AAA ATPase family. Homohexamer. The hexameric complex has a two-ring architecture resembling a top hat that caps the 20S proteasome core at one or both ends. Upon ATP-binding, the C-terminus of PAN interacts with the alpha-rings of the proteasome core by binding to the intersubunit pockets.

It is found in the cytoplasm. Functionally, ATPase which is responsible for recognizing, binding, unfolding and translocation of substrate proteins into the archaeal 20S proteasome core particle. Is essential for opening the gate of the 20S proteasome via an interaction with its C-terminus, thereby allowing substrate entry and access to the site of proteolysis. Thus, the C-termini of the proteasomal ATPase function like a 'key in a lock' to induce gate opening and therefore regulate proteolysis. Unfolding activity requires energy from ATP hydrolysis, whereas ATP binding alone promotes ATPase-20S proteasome association which triggers gate opening, and supports translocation of unfolded substrates. The polypeptide is Proteasome-activating nucleotidase 2 (Halobacterium salinarum (strain ATCC 700922 / JCM 11081 / NRC-1) (Halobacterium halobium)).